The following is a 65-amino-acid chain: Dybowskin-2CDYa (65 aa).

Residues 1–22 form the signal peptide; sequence MFTLKKSLLLLFFIGVIKLSLC. Positions 23–47 are excised as a propeptide; it reads EEERNADDDERRDDPDEMDVEVENR. Residues 26 to 43 show a composition bias toward acidic residues; that stretch reads RNADDDERRDDPDEMDVE. The interval 26–65 is disordered; that stretch reads RNADDDERRDDPDEMDVEVENRSAVGRHGRRFGLRKHRKH. Basic residues predominate over residues 50 to 65; it reads VGRHGRRFGLRKHRKH.

Belongs to the frog skin active peptide (FSAP) family. Brevinin subfamily. As to expression, expressed by the skin glands.

It localises to the secreted. In terms of biological role, antimicrobial peptide. Has activity against the Gram-positive bacterium S.aureus (MIC=6 uM) and the Gram-negative bacterium E.coli (MIC=3 uM). Lacks hemolytic activity against human erythrocytes. The sequence is that of Dybowskin-2CDYa from Rana dybowskii (Dybovsky's frog).